A 698-amino-acid chain; its full sequence is Methionine--tRNA ligase (698 aa).

Residues 21–31 (PYANGPLHFGH) carry the 'HIGH' region motif. Residues cysteine 153, cysteine 156, cysteine 166, and cysteine 169 each coordinate Zn(2+). Residues 341–345 (QFSKS) carry the 'KMSKS' region motif. Lysine 344 provides a ligand contact to ATP. A tRNA-binding domain is found at 599 to 698 (DFRKLDLRVG…EDVAPGSLVS (100 aa)).

This sequence belongs to the class-I aminoacyl-tRNA synthetase family. MetG type 1 subfamily. In terms of assembly, homodimer. It depends on Zn(2+) as a cofactor.

It is found in the cytoplasm. It catalyses the reaction tRNA(Met) + L-methionine + ATP = L-methionyl-tRNA(Met) + AMP + diphosphate. Is required not only for elongation of protein synthesis but also for the initiation of all mRNA translation through initiator tRNA(fMet) aminoacylation. In Protochlamydia amoebophila (strain UWE25), this protein is Methionine--tRNA ligase.